Here is a 134-residue protein sequence, read N- to C-terminus: Small ribosomal subunit protein uS8c (134 aa).

It belongs to the universal ribosomal protein uS8 family. In terms of assembly, part of the 30S ribosomal subunit.

It localises to the plastid. Its subcellular location is the chloroplast. Its function is as follows. One of the primary rRNA binding proteins, it binds directly to 16S rRNA central domain where it helps coordinate assembly of the platform of the 30S subunit. This chain is Small ribosomal subunit protein uS8c (rps8), found in Lepidium virginicum (Virginia pepperweed).